Here is a 292-residue protein sequence, read N- to C-terminus: uncharacterized protein (292 aa).

NADP(+) is bound by residues leucine 17, aspartate 55, asparagine 82, and lysine 115. Residue serine 134 is the Proton donor of the active site. Tyrosine 148, lysine 152, and threonine 184 together coordinate NADP(+). Tyrosine 148 serves as the catalytic Proton acceptor. The active-site Lowers pKa of active site Tyr is the lysine 152.

Belongs to the short-chain dehydrogenases/reductases (SDR) family.

Its subcellular location is the cytoplasm. This is an uncharacterized protein from Schizosaccharomyces pombe (strain 972 / ATCC 24843) (Fission yeast).